A 507-amino-acid chain; its full sequence is Cyclic GMP-AMP synthase (507 aa).

The segment at 1–146 (MEDPRRRTTA…PRAPRGSRKE (146 aa)) is DNA-binding. Residues 1–151 (MEDPRRRTTA…GSRKEPDKLK (151 aa)) are disordered. The segment covering 7 to 18 (RTTAPRAKKPSA) has biased composition (basic residues). A compositionally biased stretch (basic and acidic residues) spans 44–57 (RRAERDGDTTEKPR). The tract at residues 48–59 (RDGDTTEKPRAP) is required for association with the cell membrane. Thr-52 bears the Phosphothreonine mark. The tract at residues 119 to 132 (RKVVRGPSHRRGAR) is required for activation upon DNA viral infection. Residues 121-131 (VVRGPSHRRGA) show a composition bias toward basic residues. Positions 154 to 159 (LDKLRL) match the Nuclear export signal motif. Position 156 is an N6-lactoyllysine (Lys-156). The DNA-binding stretch occupies residues 158-201 (RLKRKDISEAAETVNKVVERLLRRMQKRESEFKGVEQLNTGSYY). Glu-176 bears the PolyADP-ribosyl glutamic acid mark. Thr-197 lines the GTP pocket. Ser-199 contacts ATP. Ser-199 is subject to Phosphoserine. At Tyr-201 the chain carries Phosphotyrosine. Glu-211 and Asp-213 together coordinate Mg(2+). Asp-213 contacts 2',3'-cGAMP. Lys-217 participates in a covalent cross-link: Glycyl lysine isopeptide (Lys-Gly) (interchain with G-Cter in SUMO). Lys-271 participates in a covalent cross-link: Glycyl lysine isopeptide (Lys-Gly) (interchain with G-Cter in ubiquitin). Glu-272 is subject to 5-glutamyl polyglutamate. The Nuclear localization signal signature appears at 281–291 (DVSVEKEKPGS). Gly-290 lines the 2',3'-cGAMP pocket. Position 291 is a phosphoserine; by CDK1 and PKB (Ser-291). Residue Glu-302 is modified to 5-glutamyl glutamate. GTP is bound at residue Asp-307. Asp-307 serves as a coordination point for Mg(2+). Asp-307 serves as a coordination point for 2',3'-cGAMP. The interval 329-370 (QGWLGTKVRTNLRREPFYLVPKNAKDGNSFQGETWRLSFSHT) is interaction with collided ribosomes. Lys-335 is covalently cross-linked (Glycyl lysine isopeptide (Lys-Gly) (interchain with G-Cter in SUMO); alternate). Residue Lys-335 forms a Glycyl lysine isopeptide (Lys-Gly) (interchain with G-Cter in ubiquitin); alternate linkage. 2',3'-cGAMP is bound by residues Lys-350 and 364–366 (RLS). 364–371 (RLSFSHTE) provides a ligand contact to GTP. Glu-371 is an ATP binding site. A Glycyl lysine isopeptide (Lys-Gly) (interchain with G-Cter in SUMO); alternate cross-link involves residue Lys-372. Lys-372 participates in a covalent cross-link: Glycyl lysine isopeptide (Lys-Gly) (interchain with G-Cter in ubiquitin); alternate. Lys-372 is modified (N6-acetyllysine). Residues 372–395 (KYILNNHGIEKTCCESSGAKCCRK) are DNA-binding. Residue His-378 coordinates Zn(2+). Lys-382 participates in a covalent cross-link: Glycyl lysine isopeptide (Lys-Gly) (interchain with G-Cter in SUMO). N6-acetyllysine is present on Lys-382. Zn(2+) contacts are provided by Cys-384, Cys-385, and Cys-392. 2 S-palmitoyl cysteine lipidation sites follow: Cys-392 and Cys-393. Glycyl lysine isopeptide (Lys-Gly) (interchain with G-Cter in ubiquitin) cross-links involve residues Lys-399, Lys-402, Lys-409, and Lys-410. An ATP-binding site is contributed by Lys-402. Residue Lys-402 is modified to N6-acetyllysine. Ser-420 carries the post-translational modification Phosphoserine. 420-424 (SYHVK) lines the ATP pocket. Cys-459 is lipidated: S-palmitoyl cysteine. A Glycyl lysine isopeptide (Lys-Gly) (interchain with G-Cter in SUMO); alternate cross-link involves residue Lys-464. A Glycyl lysine isopeptide (Lys-Gly) (interchain with G-Cter in ubiquitin); alternate cross-link involves residue Lys-464. An N6-methyllysine modification is found at Lys-491.

The protein belongs to the mab-21 family. In terms of assembly, monomer in the absence of DNA. Homodimer in presence of dsDNA: forms a 2:2 dimer with two enzymes binding to two DNA molecules. Interacts with nucleosomes; interaction is mainly mediated via histones H2A and H2B and inactivates the nucleotidyltransferase activity by blocking DNA-binding and subsequent activation. Interacts with PQBP1 (via WW domain). Interacts with TRIM14; this interaction recruits USP14, leading to deubiquitinate and stabilize CGAS and promote type I interferon production. Interacts with ZCCHC3; promoting sensing of dsDNA by CGAS. Interacts (when not monomethylated) with (poly-ADP-ribosylated) PARP1; interaction takes place in the nucleus and prevents the formation of the PARP1-TIMELESS complex. Interacts (when monomethylated) with SGF29; interaction with SGF29 prevents interaction with PARP1. Interacts with PCBP2; preventing the formation of liquid-like droplets in which CGAS is activated. Interacts with Irgm1; promoting CGAS degradation. Interacts with DDX41. Requires Mg(2+) as cofactor. The cofactor is Mn(2+). Zn(2+) is required as a cofactor. The N-terminal disordered part (1-146) is phosphorylated by AURKB during the G2-M transition, blocking CGAS liquid phase separation and preventing activation. Phosphorylation at Tyr-201 by BLK promotes cytosolic retention. Localizes into the nucleus following dephosphorylation at Tyr-201. Phosphorylation at Ser-420 activates the nucleotidyltransferase activity. Dephosphorylation at Ser-420 by PPP6C impairs its ability to bind GTP, thereby inactivating it. Phosphorylation at Thr-52 and Ser-199 by PRKDC inhibits its cyclic GMP-AMP synthase activity by impairing homodimerization and activation. Phosphorylation at Ser-291 by AKT (AKT1, AKT2 or AKT3) suppresses the nucleotidyltransferase activity. Phosphorylation at Ser-291 by CDK1 during mitosis leads to its inhibition, thereby preventing CGAS activation by self-DNA during mitosis. Dephosphorylated at Ser-291 by protein phosphatase PP1 upon mitotic exit. Post-translationally, ubiquitinated at Lys-402 via 'Lys-48'-linked polyubiquitin chains, leading to its SQSTM1-mediated autophagic degradation. Interaction with TRIM14 promotes recruitment of USP14, leading to deubiquitinate Lys-402 and stabilize CGAS. Ubiquitinated at Lys-372 by RNF185 via 'Lys-27'-linked polyubiquitination, promoting CGAS cyclic GMP-AMP synthase activity. Monoubiquitination at Lys-335 by TRIM56 promotes oligomerization and subsequent activation. Monoubiquitination by TRIM41 promotes CGAS activation. Ubiquitination at Lys-271 and Lys-464 via 'Lys-48'-linked polyubiquitination promotes its degradation. Deubiquitination at Lys-271 by USP29 promotes its stabilization. Deubiquitinated by USP27X, promoting its stabilization. Ubiquitinated at Lys-399 via 'Lys-63'-linked polyubiquitin chains by MARCHF8, leading to the inhibition of its DNA binding ability. In cycling cells, nucleosome-bound CGAS is ubiquitinated at Lys-409 and Lys-410 via 'Lys-48'-linked polyubiquitin chains by the ECS(SPSB3) complex, leading to its degradation: ubiquitination and degradation of nuclear CGAS during G1 and G2 phases is required to promote low intranuclear CGAS abundance before the next mitotic cycle. In terms of processing, sumoylated at Lys-217 and Lys-464 by TRIM38 in uninfected cells and during the early phase of viral infection, promoting its stability by preventing ubiquitination at Lys-271 and Lys-464, and subsequent degradation. Desumoylated by SENP2 during the late phase of viral infection. Sumoylation at Lys-335, Lys-372 and Lys-382 prevents DNA-binding, oligomerization and nucleotidyltransferase activity. Desumoylation at Lys-335, Lys-372 and Lys-382 by SENP7 relieves inhibition and activates CGAS. Polyglutamylated by TTLL6 at Glu-272, leading to impair DNA-binding activity. Monoglutamylated at Glu-302 by TTLL4, leading to impair the nucleotidyltransferase activity. Deglutamylated by AGBL5/CCP5 and AGBL6/CCP6. Post-translationally, acetylation at Lys-372, Lys-382 and Lys-402 inhibits the cyclic GMP-AMP synthase activity. Deacetylated upon cytosolic DNA challenge such as viral infections. Acetylation by KAT5 increases the cyclic GMP-AMP synthase activity by promoting DNA-binding and subsequent activation. In terms of processing, proteolytically cleaved by apoptotic caspases during apoptosis, leading to its inactivation. The damage of the nucleus and the mitochondria during apoptosis leads to leakage of nuclear and mitochondrial DNA, which activate CGAS: cleavage and inactivation during apoptosis in required to prevent cytokine overproduction. Cleaved by CASP7 and CASP3 during virus-induced apoptosis, thereby inactivating it and preventing cytokine overproduction. Cleaved by CASP1 upon DNA virus infection; the cleavage impairs cGAMP production. Also cleaved by the pyroptotic CASP4 during non-canonical inflammasome activation; does not cut at the same sites than CASP1. Degraded via selective autophagy following interaction with Irgm1. Irgm1 promotes CGAS recruitment to autophagosome membranes, promoting its SQSTM1/p62-dependent autophagic degradation. Post-translationally, poly-ADP-ribosylation at Glu-176 by PARP1 impairs DNA-binding, thereby preventing the cyclic GMP-AMP synthase activity. In terms of processing, palmitoylation at Cys-459 by ZDHHC18 impairs DNA-binding, thereby preventing the cyclic GMP-AMP synthase activity. Palmitoylation at Cys-392 and Cys-393 by ZDHHC9 promotes homodimerization and cyclic GMP-AMP synthase activity. Depalmitoylation at Cys-392 and Cys-393 by LYPLAL1 impairs homodimerization and cyclic GMP-AMP synthase activity. Monomethylated at Lys-491 by SETD7. Monomethylation promotes interaction with SGF29, preventing interaction between PARP1 nad SGF29. Demethylation by RIOX1 promotes interaction with PARP1, followed by PARP1 inactivation. Post-translationally, lactylation by AARS2 prevents ability to undergo liquid-liquid phase separation (LLPS), thereby inhibiting CGAS activation.

Its subcellular location is the nucleus. The protein resides in the chromosome. The protein localises to the cell membrane. It is found in the cytoplasm. It localises to the cytosol. It carries out the reaction GTP + ATP = 2',3'-cGAMP + 2 diphosphate. It catalyses the reaction GTP + ATP = pppGp(2'-5')A + diphosphate. The catalysed reaction is pppGp(2'-5')A = 2',3'-cGAMP + diphosphate. With respect to regulation, the enzyme activity is strongly increased by double-stranded DNA (dsDNA), but not by single-stranded DNA or RNA. DNA-binding induces the formation of liquid-like droplets in which CGAS is activated. Liquid-like droplets also create a selective environment that restricts entry of negative regulators, such as TREX1 or BANF1/BAF, allowing sensing of DNA. A number of mechanisms exist to restrict its activity toward self-DNA. The nucleotidyltransferase activity is inhibited in the nucleus via its association with nucleosomes: interacts with the acidic patch of histones H2A and H2B, thereby blocking DNA-binding and subsequent activation. CGAS is also inactive when associated with mitotic chromatin. Chromatin-bound CGAS cannot be activated by exogenous DNA in mitotic cells: phosphorylation of the N-terminal disordered part by AURKB during the G2-M transition blocks CGAS liquid phase separation and activation. Activity toward self-DNA is inhibited by BANF1/BAF upon acute loss of nuclear membrane integrity: BANF1/BAF acts by outcompeting CGAS for DNA-binding, thereby preventing CGAS activation. DNA-induced activation at micronuclei is also limited by TREX1, which degrades micronuclear DNA upon nuclear envelope rupture, thereby preventing CGAS activation. CGAS can be released from nucleosomes and activated by MRE11 component of the MRN complex, which displaces CGAS from acidic-patch-mediated sequestration. Acetylation at Lys-372, Lys-382 and Lys-402 inhibits the cyclic GMP-AMP synthase activity. Acetylation by KAT5 increases the cyclic GMP-AMP synthase activity by promoting DNA-binding and subsequent activation. Phosphorylation at Ser-291 suppresses the nucleotidyltransferase activity. Phosphorylation at Ser-420 promotes the cyclic GMP-AMP synthase activity. Phosphorylation at Thr-52 and Ser-199 inhibits its cyclic GMP-AMP synthase activity. Ubiquitination at Lys-372 via 'Lys-27'-linked polyubiquitination enhances the cyclic GMP-AMP synthase activity. Monoubiquitination at Lys-335 promotes oligomerization and subsequent activation. Sumoylation at Lys-335, Lys-372 and Lys-382 prevents DNA-binding, oligomerization and nucleotidyltransferase activity. The enzyme activity is impaired by the cleavage by CASP1. In addition to DNA, also activated by collided ribosomes upon translation stress: specifically binds collided ribosomes, promoting its activation and triggering type-I interferon production. In hematopoietic stem cells, binding to circular RNA cia-cGAS inhibits the cyclic GMP-AMP synthase activity. Strongly inhibited by compound RU.521, which is specific for mouse protein. In terms of biological role, nucleotidyltransferase that catalyzes the formation of cyclic GMP-AMP (2',3'-cGAMP) from ATP and GTP and plays a key role in innate immunity. Catalysis involves both the formation of a 2',5' phosphodiester linkage at the GpA step and the formation of a 3',5' phosphodiester linkage at the ApG step, producing c[G(2',5')pA(3',5')p]. Acts as a key DNA sensor: directly binds double-stranded DNA (dsDNA), inducing the formation of liquid-like droplets in which CGAS is activated, leading to synthesis of 2',3'-cGAMP, a second messenger that binds to and activates STING1, thereby triggering type-I interferon production. Preferentially binds long dsDNA (around 45 bp) and forms ladder-like networks that function cooperatively to stabilize individual cGAS-dsDNA complexes. Acts as a key foreign DNA sensor, the presence of double-stranded DNA (dsDNA) in the cytoplasm being a danger signal that triggers the immune responses. Has antiviral activity by sensing the presence of dsDNA from DNA viruses in the cytoplasm. Also acts as an innate immune sensor of infection by retroviruses by detecting the presence of reverse-transcribed DNA in the cytosol. Detection of retroviral reverse-transcribed DNA in the cytosol may be indirect and be mediated via interaction with PQBP1, which directly binds reverse-transcribed retroviral DNA. Also detects the presence of DNA from bacteria. 2',3'-cGAMP can be transferred from producing cells to neighboring cells through gap junctions, leading to promote STING1 activation and convey immune response to connecting cells. 2',3'-cGAMP can also be transferred between cells by virtue of packaging within viral particles contributing to IFN-induction in newly infected cells in a cGAS-independent but STING1-dependent manner. Also senses the presence of neutrophil extracellular traps (NETs) that are translocated to the cytosol following phagocytosis, leading to synthesis of 2',3'-cGAMP. In addition to foreign DNA, can also be activated by endogenous nuclear or mitochondrial DNA. When self-DNA leaks into the cytosol during cellular stress (such as mitochondrial stress, DNA damage, mitotic arrest or senescence), or is present in form of cytosolic micronuclei, CGAS is activated leading to a state of sterile inflammation. Acts as a regulator of cellular senescence by binding to cytosolic chromatin fragments that are present in senescent cells, leading to trigger type-I interferon production via STING1 and promote cellular senescence. Also involved in the inflammatory response to genome instability and double-stranded DNA breaks: acts by localizing to micronuclei arising from genome instability. Micronuclei, which as frequently found in cancer cells, consist of chromatin surrounded by its own nuclear membrane: following breakdown of the micronuclear envelope, a process associated with chromothripsis, CGAS binds self-DNA exposed to the cytosol, leading to 2',3'-cGAMP synthesis and subsequent activation of STING1 and type-I interferon production. In a healthy cell, CGAS is however kept inactive even in cellular events that directly expose it to self-DNA, such as mitosis, when cGAS associates with chromatin directly after nuclear envelope breakdown or remains in the form of postmitotic persistent nuclear cGAS pools bound to chromatin. Nuclear CGAS is inactivated by chromatin via direct interaction with nucleosomes, which block CGAS from DNA binding and thus prevent CGAS-induced autoimmunity. Also acts as a suppressor of DNA repair in response to DNA damage: inhibits homologous recombination repair by interacting with PARP1, the CGAS-PARP1 interaction leading to impede the formation of the PARP1-TIMELESS complex. In addition to DNA, also sense translation stress: in response to translation stress, translocates to the cytosol and associates with collided ribosomes, promoting its activation and triggering type-I interferon production. The polypeptide is Cyclic GMP-AMP synthase (Mus musculus (Mouse)).